A 437-amino-acid polypeptide reads, in one-letter code: Argininosuccinate lyase (437 aa).

Belongs to the lyase 1 family. Argininosuccinate lyase subfamily.

It localises to the cytoplasm. The catalysed reaction is 2-(N(omega)-L-arginino)succinate = fumarate + L-arginine. It participates in amino-acid biosynthesis; L-arginine biosynthesis; L-arginine from L-ornithine and carbamoyl phosphate: step 3/3. This Clostridium acetobutylicum (strain ATCC 824 / DSM 792 / JCM 1419 / IAM 19013 / LMG 5710 / NBRC 13948 / NRRL B-527 / VKM B-1787 / 2291 / W) protein is Argininosuccinate lyase.